A 421-amino-acid polypeptide reads, in one-letter code: Osmoprotective compounds-binding protein GgtB (421 aa).

Positions 1-18 (MKFFKITTLIISLIVLTS) are cleaved as a signal peptide. The N-palmitoyl cysteine moiety is linked to residue C19. The S-diacylglycerol cysteine moiety is linked to residue C19.

The protein belongs to the bacterial solute-binding protein 1 family. As to quaternary structure, the complex is composed of two ATP-binding proteins (GgtA), two transmembrane proteins (GgtC and GgtD) and a solute-binding protein (GgtB).

It localises to the cell membrane. Functionally, part of the ABC transporter complex GgtABCD involved in the uptake of the osmoprotective compounds glucosylglycerol (GG), sucrose and trehalose. Binds glucosylglycerol and exhibits a somewhat lower affinity towards sucrose and a substantially lower affinity towards trehalose. The sequence is that of Osmoprotective compounds-binding protein GgtB from Synechocystis sp. (strain ATCC 27184 / PCC 6803 / Kazusa).